The primary structure comprises 216 residues: 2-phospho-L-lactate guanylyltransferase (216 aa).

It belongs to the CofC family. Homodimer.

It catalyses the reaction (2S)-2-phospholactate + GTP + H(+) = (2S)-lactyl-2-diphospho-5'-guanosine + diphosphate. The protein operates within cofactor biosynthesis; coenzyme F420 biosynthesis. Its function is as follows. Guanylyltransferase that catalyzes the activation of (2S)-2-phospholactate (2-PL) as (2S)-lactyl-2-diphospho-5'-guanosine, via the condensation of 2-PL with GTP. It is involved in the biosynthesis of coenzyme F420, a hydride carrier cofactor. This is 2-phospho-L-lactate guanylyltransferase from Methanocaldococcus infernus (strain DSM 11812 / JCM 15783 / ME).